The chain runs to 309 residues: Probable porphobilinogen deaminase (309 aa).

Residue cysteine 233 is modified to S-(dipyrrolylmethanemethyl)cysteine.

It belongs to the HMBS family. Requires dipyrromethane as cofactor.

It catalyses the reaction 4 porphobilinogen + H2O = hydroxymethylbilane + 4 NH4(+). Its pathway is porphyrin-containing compound metabolism; protoporphyrin-IX biosynthesis; coproporphyrinogen-III from 5-aminolevulinate: step 2/4. Its function is as follows. Tetrapolymerization of the monopyrrole PBG into the hydroxymethylbilane pre-uroporphyrinogen in several discrete steps. This is Probable porphobilinogen deaminase from Methanococcoides burtonii (strain DSM 6242 / NBRC 107633 / OCM 468 / ACE-M).